The following is a 179-amino-acid chain: SCAN domain-containing protein 1 (179 aa).

The disordered stretch occupies residues 1-108 (MAATEPILAA…GSRLGPETFR (108 aa)). Residues 60 to 80 (AIPTPQAAASAAPELPLGPAP) are compositionally biased toward low complexity. Positions 108–166 (RQRFRQFRYQDAAGPREAFRQLRELSRQWLRPDIRTKEQIVEMLVQEQLLAILPEAARA) constitute an SCAN box domain.

In terms of assembly, interacts with ZNF202.

The protein resides in the nucleus. In terms of biological role, may regulate transcriptional activity. This chain is SCAN domain-containing protein 1 (SCAND1), found in Pongo pygmaeus (Bornean orangutan).